We begin with the raw amino-acid sequence, 289 residues long: Iodotyrosine deiodinase 1 (289 aa).

The helical transmembrane segment at 1 to 21 (MYFLTPILVAILCILVVWIFK) threads the bilayer. A compositionally biased stretch (basic and acidic residues) spans 29–58 (KKKGEPRTRAEARPWVDEDLKDSSDLHQAE). Residues 29–69 (KKKGEPRTRAEARPWVDEDLKDSSDLHQAEEDADEWQESEE) form a disordered region. Residues 59–69 (EDADEWQESEE) show a composition bias toward acidic residues. FMN contacts are provided by residues 100–104 (RRSVR), Ser-128, and 128–129 (SG). 3-iodo-L-tyrosine contacts are provided by Ala-130, Glu-157, Tyr-161, and Lys-182. FMN contacts are provided by residues 237-239 (TTT) and Arg-279.

The protein belongs to the nitroreductase family. As to quaternary structure, homodimer. It depends on FMN as a cofactor. Expressed at a high level in thyroid gland (at protein level). Expressed at a high level in thyroid gland and at lower level in kidney and trachea.

It is found in the cell membrane. The protein localises to the cytoplasmic vesicle membrane. The enzyme catalyses 2 iodide + L-tyrosine + 2 NADP(+) = 3,5-diiodo-L-tyrosine + 2 NADPH + H(+). It carries out the reaction iodide + L-tyrosine + NADP(+) = 3-iodo-L-tyrosine + NADPH. It catalyses the reaction 3-iodo-L-tyrosine + iodide + NADP(+) = 3,5-diiodo-L-tyrosine + NADPH + H(+). The catalysed reaction is L-tyrosine + chloride + NADP(+) = 3-chloro-L-tyrosine + NADPH. The enzyme catalyses bromide + L-tyrosine + NADP(+) = 3-bromo-L-tyrosine + NADPH. Functionally, catalyzes the dehalogenation of halotyrosines such as 3-bromo-L-tyrosine, 3-chloro-L-tyrosine, 3-iodo-L-tyrosine and 3,5-diiodo-L-tyrosine. During thyroid hormone biosynthesis, facilitates iodide salvage by catalysing the oxidative NADPH-dependent deiodination of the halogenated by-products of thyroid hormone production, monoiodotyrosine (L-MIT) and diiodotyrosine (L-DIT). The scavanged iodide can then reenter the hormone-producing pathways. Acts more efficiently on 3-iodo-L-tyrosine than 3,5-diiodo-L-tyrosine. The chain is Iodotyrosine deiodinase 1 from Homo sapiens (Human).